Here is a 300-residue protein sequence, read N- to C-terminus: Kynurenine formamidase (300 aa).

An HGGXW motif is present at residues 86 to 90 (HGGYW). Ser-157 acts as the Nucleophile in catalysis. Catalysis depends on residues Asp-244 and His-276.

This sequence belongs to the kynurenine formamidase family. Homodimer.

It carries out the reaction N-formyl-L-kynurenine + H2O = L-kynurenine + formate + H(+). The protein operates within amino-acid degradation; L-tryptophan degradation via kynurenine pathway; L-kynurenine from L-tryptophan: step 2/2. Catalyzes the hydrolysis of N-formyl-L-kynurenine to L-kynurenine, the second step in the kynurenine pathway of tryptophan degradation. Required for elimination of toxic metabolites. The sequence is that of Kynurenine formamidase (KFase) from Drosophila melanogaster (Fruit fly).